We begin with the raw amino-acid sequence, 707 residues long: Tubulin polyglutamylase ttll-11 (707 aa).

One can recognise a TTL domain in the interval 124–488 (RFTIDTSRAK…PLVRDTLLLV (365 aa)). ATP contacts are provided by residues 279 to 282 (QEYV), lysine 293, and aspartate 295. A disordered region spans residues 675 to 707 (RNRSGTNGRKQNFTDDNNNPNSFAHLPKINERL). A compositionally biased stretch (polar residues) spans 677–696 (RSGTNGRKQNFTDDNNNPNS).

This sequence belongs to the tubulin--tyrosine ligase family. In terms of tissue distribution, expressed in amphid sensory neurons. Weakly expressed in body wall muscles. Isoform a: Specifically expressed in ciliated sensory neurons in the head, including the IL1s, OLQ, head CEP, and amphid neurons. In the male tail, expressed in HOA, RnA, and phasmid neurons. Isoform b: Specifically expressed in male and hermaphrodite IL2 ciliated sensory neurons, and in male-specific CEM, HOB and RnB ciliated sensory neurons.

The protein localises to the cell projection. Its subcellular location is the axon. The protein resides in the perikaryon. It localises to the dendrite. It is found in the cilium. The protein localises to the extracellular vesicle. The enzyme catalyses L-glutamyl-[protein] + L-glutamate + ATP = gamma-L-glutamyl-L-glutamyl-[protein] + ADP + phosphate + H(+). Its function is as follows. Polyglutamylase which preferentially modifies tubulin. Involved in the side-chain initiation step of the polyglutamylation reaction. By controlling tubulin glutamylation, regulates ciliary specialization and motor-based transport. Promotes the formation of A and B tubule singlets by splaying microtubule doublets in cilia. Together with ttll-4 and 5, required for male mating. Specifically promotes tubulin glutamylation in a subset of ciliated neurons including amphid, phasmid, CEP and RnA neurons. In terms of biological role, specifically promotes tubulin glutamylation in male ciliated CEM, HOB and RnB neurons that release bioactive extracellular vesicles. Regulates the localization of TRP channel pdk-2 in male CEM, HOB and RnB neurons. Regulates the environmental release of bioactive extracellular vesicles in cilia. This chain is Tubulin polyglutamylase ttll-11, found in Caenorhabditis elegans.